A 46-amino-acid chain; its full sequence is Cytochrome b559 subunit beta (46 aa).

Residues 21–37 form a helical membrane-spanning segment; that stretch reads WLALHTLGIPTVFFLGA. His25 contributes to the heme binding site.

It belongs to the PsbE/PsbF family. Heterodimer of an alpha subunit and a beta subunit. PSII is composed of 1 copy each of membrane proteins PsbA, PsbB, PsbC, PsbD, PsbE, PsbF, PsbH, PsbI, PsbJ, PsbK, PsbL, PsbM, PsbT, PsbX, PsbY, PsbZ, Psb30/Ycf12, peripheral proteins PsbO, CyanoQ (PsbQ), PsbU, PsbV and a large number of cofactors. It forms dimeric complexes. Heme b is required as a cofactor.

Its subcellular location is the cellular thylakoid membrane. Its function is as follows. This b-type cytochrome is tightly associated with the reaction center of photosystem II (PSII). PSII is a light-driven water:plastoquinone oxidoreductase that uses light energy to abstract electrons from H(2)O, generating O(2) and a proton gradient subsequently used for ATP formation. It consists of a core antenna complex that captures photons, and an electron transfer chain that converts photonic excitation into a charge separation. The sequence is that of Cytochrome b559 subunit beta from Synechococcus sp. (strain CC9605).